Here is a 285-residue protein sequence, read N- to C-terminus: Prephenate dehydratase (285 aa).

Positions 2–183 constitute a Prephenate dehydratase domain; that stretch reads KVGYLGPAAT…NHTRFVILSP (182 aa). In terms of domain architecture, ACT spans 204 to 281; sequence MVMLPQDDQS…CKVRLLGAYQ (78 aa).

The enzyme catalyses prephenate + H(+) = 3-phenylpyruvate + CO2 + H2O. It participates in amino-acid biosynthesis; L-phenylalanine biosynthesis; phenylpyruvate from prephenate: step 1/1. This is Prephenate dehydratase (pheA) from Bacillus subtilis (strain 168).